Here is a 113-residue protein sequence, read N- to C-terminus: Dynein light chain Tctex-type 1 (113 aa).

Met-1 is modified (N-acetylmethionine). An interaction with GNB1 region spans residues 41–113 (QWTTNVVEQT…CIVSAFGLSI (73 aa)).

The protein belongs to the dynein light chain Tctex-type family. Homodimer. The cytoplasmic dynein 1 complex consists of two catalytic heavy chains (HCs) and a number of non-catalytic subunits presented by intermediate chains (ICs), light intermediate chains (LICs) and light chains (LCs); the composition seems to vary in respect to the IC, LIC and LC composition. The heavy chain homodimer serves as a scaffold for the probable homodimeric assembly of the respective non-catalytic subunits. The ICs and LICs bind directly to the HC dimer and dynein LCs assemble on the IC dimer. DYNLT1 and DYNLT3 compete for association with dynein IC (DYNC1I1 or DYNC1I2). Self-associates. Interacts with RHO. Interacts with DYNC1I1 and DYNC1I2. Interacts with DOC2A, DOC2B and SCN10A. Interacts with PVR. Interacts with SVIL isoform 2. Interacts with GNB1; the interaction occurs in presence of guanine nucleotide-binding protein G(T) subunit gamma; the interaction diminishes the association of DYNLT1 with dynein IC (DYNC1I1 or DYNC1I2). Interacts with GNB2, GNB3 and GNB5; the interactions occur in presence of guanine nucleotide-binding protein G(T) subunit gamma. Interacts with ACVR2B and ARHGEF2. Interacts with DNAI4. Interacts with CFAP61. Phosphorylated by BMPR2. The phosphorylation status is proposed to regulate the association with the cytoplasmic dynein complex and may have role in cytoplasmic dynein cargo release.

It localises to the golgi apparatus. Its subcellular location is the cytoplasm. The protein localises to the cytoskeleton. It is found in the spindle. Acts as one of several non-catalytic accessory components of the cytoplasmic dynein 1 complex that are thought to be involved in linking dynein to cargos and to adapter proteins that regulate dynein function. Cytoplasmic dynein 1 acts as a motor for the intracellular retrograde motility of vesicles and organelles along microtubules. Binds to transport cargos and is involved in apical cargo transport such as rhodopsin-bearing vesicles in polarized epithelia. Is involved in intracellular targeting of D-type retrovirus gag polyproteins to the cytoplasmic assembly site. May also be a accessory component of axonemal dynein. Functionally, plays a role in neuronal morphogenesis; the function is independent of cytoplasmic dynein and seems to be coupled to regulation of the actin cytoskeleton by enhancing Rac1 activity. Required for neurite outgrowth. The function in neurogenesis may be regulated by association with a G-protein beta-gamma dimer. May function as a receptor-independent activator of heterotrimeric G-protein signaling; the activation appears to be independent of a nucleotide exchange. Plays a role in regulating neurogenesis; inhibits the genesis of neurons from precursor cells during cortical development presumably by antagonizing ARHGEF2. Unrelated to the role in retrograde microtubule-associated movement may play a role in the dimerization of cytoplasmic proteins/domains such as for ACVR2B. Binds to the cytoplasmic domain of ACVR2B and, in vitro, inhibits ACVR2B signaling. Involved in the regulation of mitotic spindle orientation. This is Dynein light chain Tctex-type 1 (Dynlt1) from Rattus norvegicus (Rat).